A 489-amino-acid chain; its full sequence is Cobyric acid synthase (489 aa).

In terms of domain architecture, GATase cobBQ-type spans 252 to 441; the sequence is ALTIGVIQLP…IHGIFANTEF (190 aa). The active-site Nucleophile is cysteine 330. Residue histidine 433 is part of the active site.

It belongs to the CobB/CobQ family. CobQ subfamily.

Its pathway is cofactor biosynthesis; adenosylcobalamin biosynthesis. Its function is as follows. Catalyzes amidations at positions B, D, E, and G on adenosylcobyrinic A,C-diamide. NH(2) groups are provided by glutamine, and one molecule of ATP is hydrogenolyzed for each amidation. This chain is Cobyric acid synthase, found in Herpetosiphon aurantiacus (strain ATCC 23779 / DSM 785 / 114-95).